Reading from the N-terminus, the 428-residue chain is 3-phosphoshikimate 1-carboxyvinyltransferase (428 aa).

Residues Lys-23, Ser-24, and Arg-28 each coordinate 3-phosphoshikimate. Lys-23 lines the phosphoenolpyruvate pocket. Residues Gly-97 and Arg-125 each contribute to the phosphoenolpyruvate site. 3-phosphoshikimate is bound by residues Ser-170, Ser-171, Gln-172, Ser-198, Asp-314, Asn-338, and Lys-342. Gln-172 contributes to the phosphoenolpyruvate binding site. Asp-314 (proton acceptor) is an active-site residue. Positions 346, 388, and 413 each coordinate phosphoenolpyruvate.

The protein belongs to the EPSP synthase family. In terms of assembly, monomer.

It is found in the cytoplasm. The catalysed reaction is 3-phosphoshikimate + phosphoenolpyruvate = 5-O-(1-carboxyvinyl)-3-phosphoshikimate + phosphate. Its pathway is metabolic intermediate biosynthesis; chorismate biosynthesis; chorismate from D-erythrose 4-phosphate and phosphoenolpyruvate: step 6/7. In terms of biological role, catalyzes the transfer of the enolpyruvyl moiety of phosphoenolpyruvate (PEP) to the 5-hydroxyl of shikimate-3-phosphate (S3P) to produce enolpyruvyl shikimate-3-phosphate and inorganic phosphate. This is 3-phosphoshikimate 1-carboxyvinyltransferase from Baumannia cicadellinicola subsp. Homalodisca coagulata.